The primary structure comprises 464 residues: GTPase Der (464 aa).

2 consecutive EngA-type G domains span residues 5–169 and 190–368; these read PTIA…KQKG and IKVA…RESH. Residues 11 to 18, 58 to 62, 121 to 124, 196 to 203, 243 to 247, and 308 to 311 contribute to the GTP site; these read GRPNVGKS, DTGGI, NKAD, GRPNAGKS, DTAGM, and NKFD. In terms of domain architecture, KH-like spans 369-461; sequence NLPTTGQLNR…PVIFSARSRV (93 aa).

The protein belongs to the TRAFAC class TrmE-Era-EngA-EngB-Septin-like GTPase superfamily. EngA (Der) GTPase family. Associates with the 50S ribosomal subunit.

Its function is as follows. GTPase that plays an essential role in the late steps of ribosome biogenesis. In Akkermansia muciniphila (strain ATCC BAA-835 / DSM 22959 / JCM 33894 / BCRC 81048 / CCUG 64013 / CIP 107961 / Muc), this protein is GTPase Der.